Consider the following 421-residue polypeptide: 4-hydroxy-3-methylbut-2-en-1-yl diphosphate synthase (flavodoxin) (421 aa).

The [4Fe-4S] cluster site is built by Cys-311, Cys-314, Cys-357, and Glu-364.

This sequence belongs to the IspG family. It depends on [4Fe-4S] cluster as a cofactor.

It catalyses the reaction (2E)-4-hydroxy-3-methylbut-2-enyl diphosphate + oxidized [flavodoxin] + H2O + 2 H(+) = 2-C-methyl-D-erythritol 2,4-cyclic diphosphate + reduced [flavodoxin]. Its pathway is isoprenoid biosynthesis; isopentenyl diphosphate biosynthesis via DXP pathway; isopentenyl diphosphate from 1-deoxy-D-xylulose 5-phosphate: step 5/6. Functionally, converts 2C-methyl-D-erythritol 2,4-cyclodiphosphate (ME-2,4cPP) into 1-hydroxy-2-methyl-2-(E)-butenyl 4-diphosphate. The chain is 4-hydroxy-3-methylbut-2-en-1-yl diphosphate synthase (flavodoxin) from Xanthomonas axonopodis pv. citri (strain 306).